A 124-amino-acid polypeptide reads, in one-letter code: uncharacterized protein (124 aa).

The protein belongs to the asfivirus H124R family.

Its subcellular location is the virion. This is an uncharacterized protein from Ornithodoros (relapsing fever ticks).